We begin with the raw amino-acid sequence, 181 residues long: Transcription termination/antitermination protein NusG (181 aa).

The 32-residue stretch at 130-161 (PGEMVRVNDGPFADFNGVVEEVDYEKSRLKVS) folds into the KOW domain.

It belongs to the NusG family. Monomer. Interacts with the transcription termination factor Rho and with RNA polymerase.

Functionally, participates in transcription elongation, termination and antitermination. In the absence of Rho, increases the rate of transcription elongation by the RNA polymerase (RNAP), probably by partially suppressing pausing. In the presence of Rho, modulates most Rho-dependent termination events by interacting with the RNAP to render the complex more susceptible to the termination activity of Rho. May be required to overcome a kinetic limitation of Rho to function at certain terminators. Also involved in ribosomal RNA transcriptional antitermination. The sequence is that of Transcription termination/antitermination protein NusG from Salmonella typhi.